The sequence spans 870 residues: Ubiquitin-protein ligase E3A (870 aa).

At serine 8 the chain carries Phosphoserine. The C4-type; atypical zinc finger occupies 42–81; it reads CGNEACTNEFCASCPTFLRMDNNAAAIKALELYKINAKLC. Over residues 171–180 the composition is skewed to basic and acidic residues; sequence EELKSLQEKD. The disordered stretch occupies residues 171 to 223; the sequence is EELKSLQEKDEDKDEDEKEKAACSAAAMEEDSEASSSRMGDSSQGDNNVQKLG. Residues 208 to 220 show a composition bias toward polar residues; sequence RMGDSSQGDNNVQ. Residue serine 213 is modified to Phosphoserine. The HECT domain maps to 542 to 870; that stretch reads NPADLKKQLY…ITYAKGFGML (329 aa). Tyrosine 654 is subject to Phosphotyrosine; by ABL1. The Glycyl thioester intermediate role is filled by cysteine 838.

In terms of assembly, the active form is probably a homotrimer. Binds UBQLN1 and UBQLN2. Interacts with the 26S proteasome. Interacts with BPY2. Interacts with HIF1AN, MAPK6 and NEURL4; interaction with MAPK6 may be mediated by NEURL4. Interacts with the proteasomal subunit PSMD4. Interacts with BMAL1. Interacts with ARC. Interacts with ESR1 and WBP2. Post-translationally, phosphorylation at Tyr-654 by ABL1 impairs E3 ligase activity. In terms of tissue distribution, widely expressed. Most abundant in brain, heart and thymus.

It localises to the cytoplasm. The protein resides in the nucleus. It catalyses the reaction S-ubiquitinyl-[E2 ubiquitin-conjugating enzyme]-L-cysteine + [acceptor protein]-L-lysine = [E2 ubiquitin-conjugating enzyme]-L-cysteine + N(6)-ubiquitinyl-[acceptor protein]-L-lysine.. The protein operates within protein modification; protein ubiquitination. In terms of biological role, E3 ubiquitin-protein ligase which accepts ubiquitin from an E2 ubiquitin-conjugating enzyme in the form of a thioester and transfers it to its substrates. Several substrates have been identified including the BMAL1, ARC, LAMTOR1, RAD23A and RAD23B, MCM7 (which is involved in DNA replication), annexin A1, the PML tumor suppressor, and the cell cycle regulator CDKN1B. Additionally, may function as a cellular quality control ubiquitin ligase by helping the degradation of the cytoplasmic misfolded proteins. Finally, UBE3A also promotes its own degradation in vivo. Plays an important role in the regulation of the circadian clock: involved in the ubiquitination of the core clock component BMAL1, leading to its proteasomal degradation. Acts as a regulator of synaptic development by mediating ubiquitination and degradation of ARC. Required for synaptic remodeling in neurons by mediating ubiquitination and degradation of LAMTOR1, thereby limiting mTORC1 signaling and activity-dependent synaptic remodeling. Synergizes with WBP2 in enhancing PGR activity. The sequence is that of Ubiquitin-protein ligase E3A from Mus musculus (Mouse).